Reading from the N-terminus, the 331-residue chain is Small ribosomal subunit protein uS2 (331 aa).

Belongs to the universal ribosomal protein uS2 family.

This chain is Small ribosomal subunit protein uS2, found in Rhodopseudomonas palustris (strain ATCC BAA-98 / CGA009).